The primary structure comprises 380 residues: O-antigen polymerase (380 aa).

12 helical membrane passes run 1–21, 27–47, 55–75, 94–114, 132–152, 169–189, 201–221, 229–249, 282–302, 306–326, 332–352, and 353–373; these read MTYFTGFILILFAIIIKRLTP, NIVLIANAFWGILLVGYTFNE, ATTLFFILAFLFFFSMTYILI, YIYWFAGMINIISICFGIILL, SISGFGLGISLPLSFCCMYLA, FLLAVLSTSKIFLILFLVYIV, LIYGVFVFGLFALSSIILGKF, IISAIFDTLRVYLFSGLAAFN, ILPWINIGVWDTNVYTAFAPW, LGLYAAIIIGILLGFYYGIWF, LAVGFYQTFLCFPLLMLFFQE, and HYLLSWKMHFIYFLCAILLAM.

Its subcellular location is the cell inner membrane. It catalyses the reaction n lipid-linked O-antigen repeat units = a lipid-linked O antigen + (n-1) polyisoprenyl diphosphate.. The protein operates within bacterial outer membrane biogenesis; LPS O-antigen biosynthesis. Functionally, polymerase involved in the biosynthesis of the lipopolysaccharide (LPS). Catalyzes the polymerization of the O-antigen repeat units on the periplasmic face of the inner membrane, leading to the formation of the lipid-linked O-antigen molecule. The protein is O-antigen polymerase of Shigella dysenteriae.